Reading from the N-terminus, the 283-residue chain is Elongation factor Ts (283 aa).

The tract at residues 84 to 87 (TDFV) is involved in Mg(2+) ion dislocation from EF-Tu.

This sequence belongs to the EF-Ts family.

Its subcellular location is the cytoplasm. Associates with the EF-Tu.GDP complex and induces the exchange of GDP to GTP. It remains bound to the aminoacyl-tRNA.EF-Tu.GTP complex up to the GTP hydrolysis stage on the ribosome. In Bifidobacterium longum (strain DJO10A), this protein is Elongation factor Ts.